A 447-amino-acid chain; its full sequence is Polyamine export protein (447 aa).

Residues 1-4 (MLNS) are Cytoplasmic-facing. Positions 1 to 197 (MLNSILVILC…ALAGVLRKQE (197 aa)) constitute a CNNM transmembrane domain. Residues 5–25 (ILVILCLIAVSAFFSMSEISL) traverse the membrane as a helical segment. At 26–54 (AASRKIKLKLLADEGNINAQRVLNMQENP) the chain is on the periplasmic side. A helical membrane pass occupies residues 55 to 75 (GMFFTVVQIGLNAVAILGGIV). Over 76-99 (GDAAFSPAFHSLFSRYMSAELSEQ) the chain is Cytoplasmic. Residues 100–120 (LSFILSFSLVTGMFILFADLT) traverse the membrane as a helical segment. Residues 121–141 (PKRIGMIAPEAVALRIINPMR) are Periplasmic-facing. The helical transmembrane segment at 142-162 (FCLYVCTPLVWFFNGLANIIF) threads the bilayer. Over 163–447 (RIFKLPMVRK…DAKDKEESVA (285 aa)) the chain is Cytoplasmic. 2 consecutive CBS domains span residues 216 to 275 (MTPR…NQSL) and 282 to 343 (QIRN…GLEE).

This sequence belongs to the UPF0053 family. PaeA subfamily.

It localises to the cell inner membrane. Functionally, involved in cadaverine and putrescine tolerance in stationary phase. May facilitate the efflux of both cadaverine and putrescine from the cytoplasm, reducing potentially toxic levels under certain stress conditions. The sequence is that of Polyamine export protein from Escherichia coli O157:H7.